The chain runs to 214 residues: A-type ATP synthase subunit D (214 aa).

It belongs to the V-ATPase D subunit family. As to quaternary structure, has multiple subunits with at least A(3), B(3), C, D, E, F, H, I and proteolipid K(x).

The protein resides in the cell membrane. Functionally, component of the A-type ATP synthase that produces ATP from ADP in the presence of a proton gradient across the membrane. The chain is A-type ATP synthase subunit D from Pyrococcus abyssi (strain GE5 / Orsay).